The sequence spans 77 residues: U8-lycotoxin-Ls1l (77 aa).

A signal peptide spans 1-20; sequence MKLMIFTGLVLFAIVSLIEA. A propeptide spanning residues 21 to 26 is cleaved from the precursor; it reads QAENEK.

It belongs to the neurotoxin 19 (CSTX) family. 08 (U8-Lctx) subfamily. Post-translationally, contains 4 disulfide bonds. As to expression, expressed by the venom gland.

It is found in the secreted. This Lycosa singoriensis (Wolf spider) protein is U8-lycotoxin-Ls1l.